Consider the following 313-residue polypeptide: tRNA dimethylallyltransferase (313 aa).

Residue 10–17 (GPTAVGKS) participates in ATP binding. Residue 12–17 (TAVGKS) participates in substrate binding. The interval 35–38 (DSTQ) is interaction with substrate tRNA.

The protein belongs to the IPP transferase family. In terms of assembly, monomer. The cofactor is Mg(2+).

The enzyme catalyses adenosine(37) in tRNA + dimethylallyl diphosphate = N(6)-dimethylallyladenosine(37) in tRNA + diphosphate. Catalyzes the transfer of a dimethylallyl group onto the adenine at position 37 in tRNAs that read codons beginning with uridine, leading to the formation of N6-(dimethylallyl)adenosine (i(6)A). This chain is tRNA dimethylallyltransferase, found in Oceanobacillus iheyensis (strain DSM 14371 / CIP 107618 / JCM 11309 / KCTC 3954 / HTE831).